Reading from the N-terminus, the 430-residue chain is Histidine--tRNA ligase, chloroplastic (430 aa).

This sequence belongs to the class-II aminoacyl-tRNA synthetase family.

Its subcellular location is the plastid. The protein localises to the chloroplast. It carries out the reaction tRNA(His) + L-histidine + ATP = L-histidyl-tRNA(His) + AMP + diphosphate + H(+). This Porphyra purpurea (Red seaweed) protein is Histidine--tRNA ligase, chloroplastic (hisS).